A 1958-amino-acid chain; its full sequence is Rho GTPase-activating protein 21 (1958 aa).

The interval 1-42 (MMATRRTGLSEGDGDKLKACEVSKNKDGKEQSETVSLSEDET) is disordered. The segment covering 13–32 (DGDKLKACEVSKNKDGKEQS) has biased composition (basic and acidic residues). Ser36 and Ser57 each carry phosphoserine. One can recognise a PDZ domain in the interval 50-159 (TVTLKRTSQG…TLELSVMPKD (110 aa)). Composition is skewed to polar residues over residues 286–295 (SNRNNHTGPS), 306–325 (SEQTSLKTVSRTTSPPLSIP), and 418–436 (ASQSTTDYNQVVPNRTTLQ). Disordered stretches follow at residues 286 to 325 (SNRNNHTGPSHRTEEVRYGVSEQTSLKTVSRTTSPPLSIP) and 418 to 458 (ASQS…QRSV). Residues 448-458 (PQSVQIRQRSV) are compositionally biased toward low complexity. Position 459 is a phosphoserine (Ser459). An omega-N-methylarginine mark is found at Arg554 and Arg575. A phosphoserine mark is found at Ser612, Ser616, and Ser625. Polar residues predominate over residues 659–687 (SLLNQQTWVRTDSAPDQQVETGKSPSLSG). The tract at residues 659–751 (SLLNQQTWVR…PSGRQTPQPL (93 aa)) is disordered. Phosphoserine is present on Ser717. Over residues 729 to 742 (LDNKEAVILREKPP) the composition is skewed to basic and acidic residues. Thr747 carries the phosphothreonine modification. Ser857, Ser862, and Ser881 each carry phosphoserine. Positions 859–885 (DHESVGPPSLDAQPNSKTERSKSYDEG) are disordered. Over residues 875–885 (KTERSKSYDEG) the composition is skewed to basic and acidic residues. At Tyr882 the chain carries Phosphotyrosine. Residues Ser924, Ser926, Ser954, Ser1099, and Ser1115 each carry the phosphoserine modification. The segment at 930–1097 (SDAAKEGWLH…AKSEPKTQSP (168 aa)) is interaction with ARF1 and ARF6. The 110-residue stretch at 931 to 1040 (DAAKEGWLHF…WIKTIQESSN (110 aa)) folds into the PH domain. A disordered region spans residues 1086 to 1133 (LGAKSEPKTQSPHSPKEESERKLLSKDDTSPPKDKGTWRKGIPSIMRK). Positions 1099–1122 (SPKEESERKLLSKDDTSPPKDKGT) are enriched in basic and acidic residues. In terms of domain architecture, Rho-GAP spans 1147–1339 (VRLDDCPPAH…TLIQHHDWFF (193 aa)). Disordered regions lie at residues 1348 to 1401 (LTTV…GSGK), 1418 to 1575 (SRKR…KHSE), 1598 to 1642 (SLDS…SEFP), and 1655 to 1686 (RGKLQEVTKSSRRNSEGSELSCTEGSLTSSLD). Positions 1349 to 1362 (TTVQEESTVDSQPV) are enriched in polar residues. Low complexity predominate over residues 1383-1401 (SDSATSDSTKSKGSWGSGK). A phosphoserine mark is found at Ser1418, Ser1432, and Ser1433. Basic and acidic residues-rich tracts occupy residues 1441–1466 (FFKKENVEQCHNDTKEESKKESETLG) and 1477–1493 (NSTRKDPSTTKDEKISL). Residue Lys1444 forms a Glycyl lysine isopeptide (Lys-Gly) (interchain with G-Cter in SUMO) linkage. Ser1504 is modified (phosphoserine). Thr1516 is subject to Phosphothreonine. Residue Ser1527 is modified to Phosphoserine. Positions 1544–1559 (SDSGTLLSTSSQASLA) are enriched in low complexity. Positions 1592–1861 (SATYLTSLDS…WLARERLRTS (270 aa)) are interaction with CTNNA1. Over residues 1603 to 1612 (RLSPEVQSVA) the composition is skewed to polar residues. Residues 1624–1634 (SELISEGRPVE) are compositionally biased toward basic and acidic residues. The residue at position 1669 (Ser1669) is a Phosphoserine. Residues 1671 to 1686 (GSELSCTEGSLTSSLD) are compositionally biased toward polar residues. Thr1682 is modified (phosphothreonine). Position 1742 is a phosphoserine (Ser1742). Residues 1860–1958 (TSTSDLSRGE…GSKAEFHPCL (99 aa)) form a disordered region. Over residues 1874-1909 (QTENPSTREIATTDTPLSLHCNTGSSSSTLASTNRP) the composition is skewed to polar residues. Position 1917 is a phosphoserine (Ser1917). Positions 1918–1931 (PDQINGESFQNVSK) are enriched in polar residues.

Interacts with GTP-bound ARF1 and ARF6. Interacts with CTNNA1. Sumoylated with SUMO2 and SUMO3 in proliferating lymphocytes. As to expression, widely expressed with higher expression in brain, heart, skeletal muscle and placenta.

The protein localises to the golgi apparatus membrane. The protein resides in the cell junction. It localises to the cytoplasmic vesicle membrane. Its subcellular location is the cytoplasm. It is found in the cytoskeleton. Its function is as follows. Functions as a GTPase-activating protein (GAP) for RHOA and CDC42. Downstream partner of ARF1 which may control Golgi apparatus structure and function. Also required for CTNNA1 recruitment to adherens junctions. The sequence is that of Rho GTPase-activating protein 21 (ARHGAP21) from Homo sapiens (Human).